The following is a 1083-amino-acid chain: DNA primase (1083 aa).

Residues 1022 to 1061 (CLRYPHRGGRTAPRTFVSLRVDHHNRLCISLAQQCFATKC) form a CHC2-type zinc finger.

It belongs to the herpesviridae DNA primase family. In terms of assembly, associates with the helicase and the primase-associated factor to form the helicase-primase factor.

It localises to the host nucleus. Functionally, essential component of the helicase/primase complex. Unwinds the DNA at the replication forks and generates single-stranded DNA for both leading and lagging strand synthesis. The primase initiates primer synthesis and thereby produces large amount of short RNA primers on the lagging strand that the polymerase elongates using dNTPs. In Homo sapiens (Human), this protein is DNA primase.